The primary structure comprises 84 residues: Exendin-2-long (84 aa).

The signal sequence occupies residues 1–23 (MKSILWLCVFGLLIATLFPVSWQ). The propeptide occupies 24–44 (MAIKSRLSSEDSETDQRLFES).

The protein belongs to the glucagon family. In terms of processing, an amidated Pro-81 is described. Such an amidation is however not compatible with the sequence displayed. Indeed cDNAs do not encode a Gly that could serve as substrate for peptide alpha-amidation. Expressed by the venom gland. Not expressed in the pancreas, liver, stomach, small intestine, lung, heart, kidney, spleen, ovary, and brain.

It is found in the secreted. In terms of biological role, has vasoactive intestinal peptide(VIP)/secretin-like biological activity. Interacts with rat and human VIP receptors 1 (VIPR1) and 2 (VIPR2), with the highest affinity for the human VIPR2. Induces hypotension that is mediated by relaxation of cardiac smooth muscle. This vasodilation may not be transduced by VIP or PACAP receptors. In Heloderma suspectum (Gila monster), this protein is Exendin-2-long.